A 385-amino-acid polypeptide reads, in one-letter code: Galactokinase (385 aa).

34–37 (EHTD) is a binding site for substrate. 124-130 (SAGLSSS) is a binding site for ATP. Positions 130 and 162 each coordinate Mg(2+). The Proton acceptor role is filled by Asp-174. Substrate is bound at residue Tyr-223.

It belongs to the GHMP kinase family. GalK subfamily.

The protein localises to the cytoplasm. The catalysed reaction is alpha-D-galactose + ATP = alpha-D-galactose 1-phosphate + ADP + H(+). It functions in the pathway carbohydrate metabolism; galactose metabolism. Its function is as follows. Catalyzes the transfer of the gamma-phosphate of ATP to D-galactose to form alpha-D-galactose-1-phosphate (Gal-1-P). The sequence is that of Galactokinase from Pasteurella multocida (strain Pm70).